The chain runs to 302 residues: 4-hydroxy-tetrahydrodipicolinate synthase (302 aa).

Thr46 contacts pyruvate. The active-site Proton donor/acceptor is the Tyr134. Lys162 functions as the Schiff-base intermediate with substrate in the catalytic mechanism. Val204 serves as a coordination point for pyruvate.

This sequence belongs to the DapA family. As to quaternary structure, homotetramer; dimer of dimers.

It is found in the cytoplasm. It carries out the reaction L-aspartate 4-semialdehyde + pyruvate = (2S,4S)-4-hydroxy-2,3,4,5-tetrahydrodipicolinate + H2O + H(+). Its pathway is amino-acid biosynthesis; L-lysine biosynthesis via DAP pathway; (S)-tetrahydrodipicolinate from L-aspartate: step 3/4. Catalyzes the condensation of (S)-aspartate-beta-semialdehyde [(S)-ASA] and pyruvate to 4-hydroxy-tetrahydrodipicolinate (HTPA). The sequence is that of 4-hydroxy-tetrahydrodipicolinate synthase from Xanthomonas campestris pv. campestris (strain ATCC 33913 / DSM 3586 / NCPPB 528 / LMG 568 / P 25).